The primary structure comprises 701 residues: Ubiquitin thioesterase zranb1 (701 aa).

Residues 3–33 form a RanBP2-type 1 zinc finger; the sequence is EHGIKWACEYCTYENWPSAIKCTMCRAPRPS. Positions 10, 13, 24, and 27 each coordinate Zn(2+). The segment at 38–59 is disordered; it reads TEEPFKNSTPDVGSMERESGSP. Residues 79–108 form a RanBP2-type 2 zinc finger; it reads TSTKWSCHMCTYLNWPRAIRCTQCLSQRRT. Positions 85, 88, 99, and 102 each coordinate Zn(2+). The interval 108–129 is disordered; the sequence is TRSPTESPQSSGSSLRAIPSPI. Residues 111–121 show a composition bias toward low complexity; it reads PTESPQSSGSS. Residues 143–173 form a RanBP2-type 3 zinc finger; it reads IKGQHWTCSACTYENCAKAKKCVVCDHPTPN. 4 residues coordinate Zn(2+): C150, C153, C164, and C167. The interval 198–220 is disordered; sequence WRGGCSSSNSQRRSPPTSKRDSD. Polar residues predominate over residues 202 to 214; it reads CSSSNSQRRSPPT. 2 ANK repeats span residues 253 to 283 and 306 to 333; these read RKTD…SGGD and YTLV…QHAA. In terms of domain architecture, OTU spans 425-585; sequence LYALWNRTAG…RGHFSALVAM (161 aa). Catalysis depends on C436, which acts as the Nucleophile. Catalysis depends on H578, which acts as the Proton acceptor.

The protein belongs to the peptidase C64 family.

The protein localises to the cytoplasm. It localises to the nucleus. The catalysed reaction is Thiol-dependent hydrolysis of ester, thioester, amide, peptide and isopeptide bonds formed by the C-terminal Gly of ubiquitin (a 76-residue protein attached to proteins as an intracellular targeting signal).. In terms of biological role, ubiquitin thioesterase, which specifically hydrolyzes 'Lys-29'-linked and 'Lys-33'-linked diubiquitin. Also cleaves 'Lys-63'-linked chains, but with 40-fold less efficiency compared to 'Lys-29'-linked ones. Positive regulator of the Wnt signaling pathway that deubiquitinates apc protein, a negative regulator of Wnt-mediated transcription. Acts as a regulator of autophagy by mediating deubiquitination of pik3c3/vps34, thereby promoting autophagosome maturation. Plays a role in the regulation of cell morphology and cytoskeletal organization. Required in the stress fiber dynamics and cell migration. The protein is Ubiquitin thioesterase zranb1 (zranb1) of Xenopus tropicalis (Western clawed frog).